Here is a 461-residue protein sequence, read N- to C-terminus: Cysteine--tRNA ligase (461 aa).

Cys28 contacts Zn(2+). The 'HIGH' region motif lies at 30–40 (VTIYDLCHIGH). Positions 209, 234, and 238 each coordinate Zn(2+). Positions 266-270 (KMSKS) match the 'KMSKS' region motif. Lys269 is an ATP binding site.

It belongs to the class-I aminoacyl-tRNA synthetase family. Monomer. The cofactor is Zn(2+).

Its subcellular location is the cytoplasm. It carries out the reaction tRNA(Cys) + L-cysteine + ATP = L-cysteinyl-tRNA(Cys) + AMP + diphosphate. The polypeptide is Cysteine--tRNA ligase (Serratia proteamaculans (strain 568)).